The sequence spans 1220 residues: Osmosensing histidine protein kinase SLN1 (1220 aa).

At Met-1 to Gln-22 the chain is on the cytoplasmic side. A helical membrane pass occupies residues Leu-23 to Phe-46. Over Thr-47–Lys-333 the chain is Extracellular. Residues Asn-100, Asn-138, Asn-142, Asn-181, Asn-224, and Asn-272 are each glycosylated (N-linked (GlcNAc...) asparagine). A helical membrane pass occupies residues Ile-334 to Ala-354. Residues His-355 to Lys-1220 lie on the Cytoplasmic side of the membrane. Disordered stretches follow at residues Gly-414–Phe-433 and Asn-444–Thr-500. The span at Ser-451–Ile-468 shows a compositional bias: basic and acidic residues. Phosphoserine is present on Ser-502. In terms of domain architecture, Histidine kinase spans Asn-573–Gln-928. Position 576 is a phosphohistidine; by autocatalysis (His-576). Phosphoserine is present on residues Ser-758 and Ser-833. 2 disordered regions span residues Ala-960–Gly-1016 and Asn-1040–Asp-1081. Polar residues predominate over residues Ser-965–Asn-984. A compositionally biased stretch (basic and acidic residues) spans Pro-988–Asp-1000. Phosphoserine is present on residues Ser-1041 and Ser-1044. Positions Leu-1063 to Ile-1075 are enriched in polar residues. Residues Lys-1089–Cys-1210 enclose the Response regulatory domain. Residues Glu-1094, Asp-1095, Asp-1144, and Lys-1195 each contribute to the Mg(2+) site. The residue at position 1144 (Asp-1144) is a 4-aspartylphosphate.

As to quaternary structure, interacts with DJP1, MOG1 and YPD1. Post-translationally, the phosphorelay mechanism involves the sequential transfer of a phosphate group from His-576 (H1) in the histidine kinase domain (transmitter domain) to Asp-1144 (D1) of the response regulatory domain (receiver domain). This transfer probably occurs between two SLN1 molecules, rather than intramolecularly. The phosphate group is further transferred to 'His-64' (H2) of YPD1 and finally to 'Asp-554' (D2) of SSK1 or 'Asp-427' (D2) of SKN7.

The protein localises to the cell membrane. It carries out the reaction ATP + protein L-histidine = ADP + protein N-phospho-L-histidine.. Histidine kinase that acts as an osmosensor at the plasma membrane. Part of the bifurcated SLN1-YPD1-SKN7/SSK1 two-component regulatory system, which controls activity of the HOG1 pathway and gene expression in response to changes in the osmolarity of the extracellular environment. Under normal osmotic conditions, the histidine kinase autophosphorylates His-576. This phosphate is subsequently transferred to Asp-1144, from where it is relayed to 'His-64' of the phosphorelay intermediate protein YPD1. Under high osmolarity conditions, the histidine kinase is no longer active. The sequence is that of Osmosensing histidine protein kinase SLN1 (SLN1) from Saccharomyces cerevisiae (strain ATCC 204508 / S288c) (Baker's yeast).